The chain runs to 248 residues: Probable transcriptional regulatory protein Acid_5948 (248 aa).

It belongs to the TACO1 family.

Its subcellular location is the cytoplasm. In Solibacter usitatus (strain Ellin6076), this protein is Probable transcriptional regulatory protein Acid_5948.